The following is a 594-amino-acid chain: Spindle pole body-associated protein CIK1 (594 aa).

The interval 1-29 (MNNSKIPKLSFHSDPNNVTRDFPKTKRQK) is disordered. Positions 81 to 360 (IERVKNNERK…VNELEKVQQE (280 aa)) form a coiled coil.

In terms of assembly, interacts with KAR3; the interaction is direct.

The protein localises to the nucleus. The protein resides in the cytoplasm. It localises to the cytoskeleton. Its subcellular location is the microtubule organizing center. It is found in the spindle pole body. The protein localises to the spindle. In terms of biological role, together with the minus end-directed microtubule motor KAR3, involved in spindle midzone assembly, karyogamy (nuclear fusion) during mating, and with an essential function in meiosis I. To contribute to spindle midzone assembly during mitotic metaphase, the KAR3-CIK1 motor cross-links anti-parallel microtubules to align them on the spindle axis; as the motor travels polewards splayed microtubules are pulled into alignment. During the karyogamy (nuclear fusion) step of mating, KAR3-CIK1 cross-links antiparallel cytoplasmic microtubules emanating from the spindle pole bodies of mating partners; the motor activity of KAR3 creates the force that pulls the nuclei together by sliding cross-linked microtubules past one another. KAR3-CIK1 promotes microtubule shortening predominantly from the microtubule plus-end. Required for interhomolog recombination, synapsis of homologous chromosomes and establishment of a meiosis I spindle. The polypeptide is Spindle pole body-associated protein CIK1 (CIK1) (Saccharomyces cerevisiae (strain ATCC 204508 / S288c) (Baker's yeast)).